Here is a 130-residue protein sequence, read N- to C-terminus: D-ribose pyranase (130 aa).

His20 functions as the Proton donor in the catalytic mechanism. Substrate is bound by residues Asp28, His97, and 119–121 (YAN).

The protein belongs to the RbsD / FucU family. RbsD subfamily. Homodecamer.

The protein resides in the cytoplasm. The enzyme catalyses beta-D-ribopyranose = beta-D-ribofuranose. It functions in the pathway carbohydrate metabolism; D-ribose degradation; D-ribose 5-phosphate from beta-D-ribopyranose: step 1/2. Catalyzes the interconversion of beta-pyran and beta-furan forms of D-ribose. In Thermoanaerobacter pseudethanolicus (strain ATCC 33223 / 39E) (Clostridium thermohydrosulfuricum), this protein is D-ribose pyranase.